The following is a 40-amino-acid chain: MGLSDCLIYRLVVRCFLDYSICAPFYFYHKFMLSASEPVF.

The chain crosses the membrane as a helical span at residues 7–29 (LIYRLVVRCFLDYSICAPFYFYH).

Expressed in cotyledons, hypocotyls, roots, newly developing leaves and shoot apical meristem. Not detected in flowers, siliques or mature leaves.

It localises to the cytoplasm. It is found in the nucleus. Its subcellular location is the membrane. Negative regulator of the auxin response. In Arabidopsis thaliana (Mouse-ear cress), this protein is Auxin-responsive endogenous peptide 1.